We begin with the raw amino-acid sequence, 802 residues long: MSAFPDSMDQKFHNMTVNECFQSRSTVLQGQPFGGIPTVLVLNIILWVFVVLLYSFLRKAAWDYGRLALLIHNDSLTSLIYGEQSEKSSPSEVSLEAERRDRGFSSWFFNSLTMRDRDLINKCGDDARIYITFQYHLIIFVLILCIPSLGIILPVNYIGTVLDWNSHFGRTTIVNVSTESKFLWLHSLFAFLYFLINLAFMGHHCLGFVPKKSLHFTRTLMITYVPTEIQDPEIISKHFHEAYPGCVVTRVHFCYDVRNLIDLDDQRRHAMRGRLYYTAKAKKTGKVMIKTHPCSRLCFCKCWTCFKEVDAEQYYSELEEQLTDEFNAELNRVQLKRLDLIFVTFQDARTVRRIYDDYKYIHCGRHPKQSSVTTIVKNYHWRVAHAPHPKDIIWKHLSIRRFSWWTRFIAINTFLFFLFFFLTTPAIIINTIDIYNVTRPIEKLQSPIVTQFFPSVLLWAFTVTMPLLVYLSAFLEAHWTRSSQNLIIVHKCYIFLVFMVVILPSMGLTSLHVFLRWLFDIYYLEHATIRFQCVFLPDNGAFFINYVITAALLGTGMELMRLGSLCTYCTRLFLSKSEPERVHIRKNQATDFQFGREYAWMLNVFSVVMAYSITCPIIVPFGLLYLCMKHITDRYNMYYSYAPTKLNAQIHMAAVYQAIFAPLLGLFWMLFFSILRVGSLHSITLFSMSSLIISVVIAFSGVFLGKLRIAQRYEQPEEETETVFDVEPSSTTSTPTSLLYVATVLQEPELNLTPASSPARHTYGTINSQPEEGEEESGLRGFARELDSAQFQEGLEMEGQSH.

Residues 1–35 (MSAFPDSMDQKFHNMTVNECFQSRSTVLQGQPFGG) are Extracellular-facing. Residues 36–60 (IPTVLVLNIILWVFVVLLYSFLRKA) form a helical membrane-spanning segment. Residues 61-124 (AWDYGRLALL…RDRDLINKCG (64 aa)) lie on the Cytoplasmic side of the membrane. Phosphoserine occurs at positions 75 and 78. The chain crosses the membrane as a helical span at residues 125–157 (DDARIYITFQYHLIIFVLILCIPSLGIILPVNY). The Extracellular segment spans residues 158–180 (IGTVLDWNSHFGRTTIVNVSTES). A helical membrane pass occupies residues 181-205 (KFLWLHSLFAFLYFLINLAFMGHHC). Residues 206–401 (LGFVPKKSLH…IIWKHLSIRR (196 aa)) lie on the Cytoplasmic side of the membrane. Residues 402–431 (FSWWTRFIAINTFLFFLFFFLTTPAIIINT) traverse the membrane as a helical segment. The Extracellular segment spans residues 432 to 446 (IDIYNVTRPIEKLQS). Residues 447–476 (PIVTQFFPSVLLWAFTVTMPLLVYLSAFLE) form a helical membrane-spanning segment. Topologically, residues 477 to 480 (AHWT) are cytoplasmic. Residues 481-517 (RSSQNLIIVHKCYIFLVFMVVILPSMGLTSLHVFLRW) traverse the membrane as a helical segment. The Extracellular segment spans residues 518–540 (LFDIYYLEHATIRFQCVFLPDNG). A helical membrane pass occupies residues 541–573 (AFFINYVITAALLGTGMELMRLGSLCTYCTRLF). Topologically, residues 574–593 (LSKSEPERVHIRKNQATDFQ) are cytoplasmic. The chain crosses the membrane as a helical span at residues 594 to 612 (FGREYAWMLNVFSVVMAYS). The Extracellular portion of the chain corresponds to 613–615 (ITC). Residues 616–640 (PIIVPFGLLYLCMKHITDRYNMYYS) form a helical membrane-spanning segment. Residues 641-647 (YAPTKLN) lie on the Cytoplasmic side of the membrane. Residues 648–676 (AQIHMAAVYQAIFAPLLGLFWMLFFSILR) traverse the membrane as a helical segment. The Extracellular segment spans residues 677-681 (VGSLH). The helical transmembrane segment at 682 to 702 (SITLFSMSSLIISVVIAFSGV) threads the bilayer. Residues 703-802 (FLGKLRIAQR…EGLEMEGQSH (100 aa)) are Cytoplasmic-facing. Residues 753-785 (TPASSPARHTYGTINSQPEEGEEESGLRGFARE) form a disordered region.

This sequence belongs to the CSC1 (TC 1.A.17) family. As to quaternary structure, monomer.

Its subcellular location is the endoplasmic reticulum membrane. The protein localises to the cell membrane. The catalysed reaction is Ca(2+)(in) = Ca(2+)(out). Acts as an osmosensitive cation channel preferentially activated upon hypotonic stress. In contrast to TMEM63B, does not show phospholipid scramblase activity. Enriched in mitochondria-ER contact sites where it may regulate the metabolite flux and organelles' morphologies in response to osmotic changes. In particular may regulate mitochondrial motility and function in motor neuron axons. Required for the functional integrity of the kidney glomerular filtration barrier. The polypeptide is Osmosensitive cation channel TMEM63C (Mus musculus (Mouse)).